The chain runs to 276 residues: MSSSSAAALGSDDGCSPAELRPSRYESQKRRDWQTFTQYLAAHRPPLELRRCSGAHVLEFLRYLDRFGKTRVHEPPCPSYGGRSPSAAGPVAAAAAACQCPLRQAWGSLDALVGRLRAAYDERHGRAGEPDAVAGAGAVATDSTSSSSAAAANPFAARAVRLYLRDVRDAQAMARGISYHKKKKRRGGNMNGARGGGGGGARAGVNDGDATAPPVAVTPGLPLPPLPPCLNGVPFEYCDFGSVLGGAHGAHGGHGGGGGGFYGAGVYLPFLYNTFS.

Disordered stretches follow at residues 1-30 (MSSS…SQKR) and 178-213 (SYHK…ATAP). The segment covering 21-30 (RPSRYESQKR) has biased composition (basic and acidic residues). Residues 24 to 183 (RYESQKRRDW…ARGISYHKKK (160 aa)) enclose the ALOG domain. The span at 178–187 (SYHKKKKRRG) shows a compositional bias: basic residues. The short motif at 181-185 (KKKKR) is the Nuclear localization signal element. A compositionally biased stretch (gly residues) spans 189–202 (NMNGARGGGGGGAR). Low complexity predominate over residues 203–213 (AGVNDGDATAP).

It belongs to the plant homeotic and developmental regulators ALOG protein family. Expressed at the empty glumes of immature spikelets, which are lemmas of the sterile florets located at the lateral side of the spikelet, throughout their development.

It is found in the nucleus. In terms of biological role, probable transcription regulator that acts as a developmental regulator by promoting cell growth in response to light. Transcription regulator that restrains empty glumes growth, lemmas of the sterile florets located at the lateral side of the rice spikelet, to maintain their small size, probably by repressing lemma identity via transcription regulation. The sequence is that of Protein G1 (G1) from Oryza sativa subsp. japonica (Rice).